We begin with the raw amino-acid sequence, 160 residues long: UPF0260 protein GDI1595/Gdia_1801 (160 aa).

Belongs to the UPF0260 family.

The protein is UPF0260 protein GDI1595/Gdia_1801 of Gluconacetobacter diazotrophicus (strain ATCC 49037 / DSM 5601 / CCUG 37298 / CIP 103539 / LMG 7603 / PAl5).